We begin with the raw amino-acid sequence, 173 residues long: DASH complex subunit SPC19 (173 aa).

The protein belongs to the DASH complex SPC19 family. In terms of assembly, component of the DASH complex consisting of ASK1, DAD1, DAD2, DAD3, DAD4, DAM1, DUO1, HSK3, SPC19 and SPC34, with a stoichiometry of one copy of each subunit per complex. Multiple DASH complexes oligomerize to form a ring that encircles spindle microtubules and organizes the rod-like NDC80 complexes of the outer kinetochore. DASH complex oligomerization strengthens microtubule attachments. On cytoplasmic microtubules, DASH complexes appear to form patches instead of rings.

The protein resides in the nucleus. The protein localises to the cytoplasm. It is found in the cytoskeleton. Its subcellular location is the spindle. It localises to the chromosome. The protein resides in the centromere. The protein localises to the kinetochore. In terms of biological role, component of the DASH complex that connects microtubules with kinetochores and couples microtubule depolymerisation to chromosome movement; it is involved in retrieving kinetochores to the spindle poles before their re-orientation on the spindle in early mitosis and allows microtubule depolymerization to pull chromosomes apart and resist detachment during anaphase. Kinetochores, consisting of a centromere-associated inner segment and a microtubule-contacting outer segment, play a crucial role in chromosome segregation by mediating the physical connection between centromeric DNA and microtubules. Kinetochores also serve as an input point for the spindle assembly checkpoint, which delays anaphase until all chromosomes have bioriented on the mitotic spindle. The polypeptide is DASH complex subunit SPC19 (Chaetomium thermophilum (strain DSM 1495 / CBS 144.50 / IMI 039719) (Thermochaetoides thermophila)).